Consider the following 179-residue polypeptide: Large ribosomal subunit protein uL10 (179 aa).

It belongs to the universal ribosomal protein uL10 family. As to quaternary structure, part of the ribosomal stalk of the 50S ribosomal subunit. The N-terminus interacts with L11 and the large rRNA to form the base of the stalk. The C-terminus forms an elongated spine to which L12 dimers bind in a sequential fashion forming a multimeric L10(L12)X complex.

Its function is as follows. Forms part of the ribosomal stalk, playing a central role in the interaction of the ribosome with GTP-bound translation factors. The polypeptide is Large ribosomal subunit protein uL10 (Symbiobacterium thermophilum (strain DSM 24528 / JCM 14929 / IAM 14863 / T)).